The following is a 346-amino-acid chain: Autophagy-related protein 3 (346 aa).

A flexible region region spans residues 85 to 161 (DFAGDAGHEE…DDDDEAIIRA (77 aa)). The active-site Glycyl thioester intermediate is the cysteine 238. Residues 242–322 (SVMKTLLDRA…DQEVAIRVDQ (81 aa)) are handle region.

It belongs to the ATG3 family. In terms of assembly, monomer. Interacts with apg-6/atg8 through an intermediate thioester bond through the C-terminal Gly of apg-6/atg8. Also interacts with the 40 amino acid C-terminal region of the E1-like apg-5/atg7 enzyme. Also interacts with the atg12-apg-4/atg5 conjugate.

The protein resides in the cytoplasm. Its function is as follows. E2 conjugating enzyme required for the cytoplasm to vacuole transport (Cvt) and autophagy. Required for selective autophagic degradation of the nucleus (nucleophagy) as well as for mitophagy which contributes to regulate mitochondrial quantity and quality by eliminating the mitochondria to a basal level to fulfill cellular energy requirements and preventing excess ROS production. Responsible for the E2-like covalent binding of phosphatidylethanolamine to the C-terminal Gly of apg-6/atg8. The atg12-apg-4/atg5 conjugate plays a role of an E3 and promotes the transfer of apg-6/atg8 from apg-3/atg3 to phosphatidylethanolamine (PE). This step is required for the membrane association of apg-6/atg8. The formation of the apg-6/atg8-phosphatidylethanolamine conjugate is essential for autophagy and for the cytoplasm to vacuole transport (Cvt). The apg-6/atg8-PE conjugate mediates tethering between adjacent membranes and stimulates membrane hemifusion, leading to expansion of the autophagosomal membrane during autophagy. The chain is Autophagy-related protein 3 (apg-3) from Neurospora crassa (strain ATCC 24698 / 74-OR23-1A / CBS 708.71 / DSM 1257 / FGSC 987).